A 141-amino-acid chain; its full sequence is Large ribosomal subunit protein uL11 (141 aa).

This sequence belongs to the universal ribosomal protein uL11 family. Part of the ribosomal stalk of the 50S ribosomal subunit. Interacts with L10 and the large rRNA to form the base of the stalk. L10 forms an elongated spine to which L12 dimers bind in a sequential fashion forming a multimeric L10(L12)X complex.

Forms part of the ribosomal stalk which helps the ribosome interact with GTP-bound translation factors. The sequence is that of Large ribosomal subunit protein uL11 from Acidianus ambivalens (Desulfurolobus ambivalens).